A 165-amino-acid chain; its full sequence is Small ribosomal subunit protein uS5 (165 aa).

Residues 10-73 (QIEKLISLNR…TSARKNLRFV (64 aa)) form the S5 DRBM domain.

This sequence belongs to the universal ribosomal protein uS5 family. As to quaternary structure, part of the 30S ribosomal subunit. Contacts proteins S4 and S8.

With S4 and S12 plays an important role in translational accuracy. Functionally, located at the back of the 30S subunit body where it stabilizes the conformation of the head with respect to the body. This chain is Small ribosomal subunit protein uS5, found in Borreliella afzelii (strain PKo) (Borrelia afzelii).